We begin with the raw amino-acid sequence, 223 residues long: Protein-disulfide oxidoreductase DsbI (223 aa).

Residues Leu26–Phe46 traverse the membrane as a helical segment. A disulfide bond links Cys55 and Cys58. The next 2 helical transmembrane spans lie at Val59 to Asn78 and Ile82 to Phe102. Cys127 and Cys153 are oxidised to a cystine. A helical membrane pass occupies residues Cys198–Leu218.

Belongs to the DsbB family. DsbI subfamily. Interacts with DsbL.

Its subcellular location is the cell inner membrane. Required for disulfide bond formation in some proteins. Part of a redox system composed of DsbI and DsbL that mediates formation of an essential disulfide bond in AssT. The chain is Protein-disulfide oxidoreductase DsbI from Escherichia coli O1:K1 / APEC.